A 330-amino-acid chain; its full sequence is Aspartate--ammonia ligase (330 aa).

It belongs to the class-II aminoacyl-tRNA synthetase family. AsnA subfamily.

The protein resides in the cytoplasm. It catalyses the reaction L-aspartate + NH4(+) + ATP = L-asparagine + AMP + diphosphate + H(+). It participates in amino-acid biosynthesis; L-asparagine biosynthesis; L-asparagine from L-aspartate (ammonia route): step 1/1. The chain is Aspartate--ammonia ligase from Haemophilus influenzae (strain 86-028NP).